Reading from the N-terminus, the 136-residue chain is Putative pre-16S rRNA nuclease (136 aa).

It belongs to the YqgF nuclease family.

It is found in the cytoplasm. Could be a nuclease involved in processing of the 5'-end of pre-16S rRNA. This chain is Putative pre-16S rRNA nuclease, found in Francisella philomiragia subsp. philomiragia (strain ATCC 25017 / CCUG 19701 / FSC 153 / O#319-036).